Here is a 100-residue protein sequence, read N- to C-terminus: Aspartyl/glutamyl-tRNA(Asn/Gln) amidotransferase subunit C (100 aa).

This sequence belongs to the GatC family. As to quaternary structure, heterotrimer of A, B and C subunits.

It catalyses the reaction L-glutamyl-tRNA(Gln) + L-glutamine + ATP + H2O = L-glutaminyl-tRNA(Gln) + L-glutamate + ADP + phosphate + H(+). It carries out the reaction L-aspartyl-tRNA(Asn) + L-glutamine + ATP + H2O = L-asparaginyl-tRNA(Asn) + L-glutamate + ADP + phosphate + 2 H(+). Allows the formation of correctly charged Asn-tRNA(Asn) or Gln-tRNA(Gln) through the transamidation of misacylated Asp-tRNA(Asn) or Glu-tRNA(Gln) in organisms which lack either or both of asparaginyl-tRNA or glutaminyl-tRNA synthetases. The reaction takes place in the presence of glutamine and ATP through an activated phospho-Asp-tRNA(Asn) or phospho-Glu-tRNA(Gln). This is Aspartyl/glutamyl-tRNA(Asn/Gln) amidotransferase subunit C from Streptococcus equi subsp. equi (strain 4047).